The following is a 696-amino-acid chain: Glycine--tRNA ligase beta subunit (696 aa).

The protein belongs to the class-II aminoacyl-tRNA synthetase family. In terms of assembly, tetramer of two alpha and two beta subunits.

The protein localises to the cytoplasm. The catalysed reaction is tRNA(Gly) + glycine + ATP = glycyl-tRNA(Gly) + AMP + diphosphate. This is Glycine--tRNA ligase beta subunit from Oleidesulfovibrio alaskensis (strain ATCC BAA-1058 / DSM 17464 / G20) (Desulfovibrio alaskensis).